The chain runs to 441 residues: Amino-acid acetyltransferase (441 aa).

The N-acetyltransferase domain maps to 295–434 (EQVRRATIND…QALYNYQRRS (140 aa)).

The protein belongs to the acetyltransferase family. ArgA subfamily. In terms of assembly, homohexamer.

The protein resides in the cytoplasm. It catalyses the reaction L-glutamate + acetyl-CoA = N-acetyl-L-glutamate + CoA + H(+). The protein operates within amino-acid biosynthesis; L-arginine biosynthesis; N(2)-acetyl-L-ornithine from L-glutamate: step 1/4. In Serratia proteamaculans (strain 568), this protein is Amino-acid acetyltransferase.